Consider the following 150-residue polypeptide: Large ribosomal subunit protein uL15 (150 aa).

Residues 1-55 (MADNEILQMHDLKPAPGAKKDRTRVGRGEGSKGKTSGRGAKGQTKRNHVRPGFEG) are disordered. Residues 8-32 (QMHDLKPAPGAKKDRTRVGRGEGSK) are compositionally biased toward basic and acidic residues.

This sequence belongs to the universal ribosomal protein uL15 family. Part of the 50S ribosomal subunit.

Functionally, binds to the 23S rRNA. The sequence is that of Large ribosomal subunit protein uL15 from Bifidobacterium longum (strain NCC 2705).